The primary structure comprises 510 residues: 11S globulin (510 aa).

The first 23 residues, 1 to 23 (MAKPILLSISLCLVALVNGCLAQ), serve as a signal peptide directing secretion. Cystine bridges form between Cys-35-Cys-68 and Cys-111-Cys-325. In terms of domain architecture, Cupin type-1 1 spans 38–257 (KRLVALEPSN…AFNVDTETAR (220 aa)). Disordered stretches follow at residues 194–239 (AGNP…VFSG) and 284–319 (WSREEQEREERKERERERESESERRQSRRGGRDDNG). Residues 284 to 318 (WSREEQEREERKERERERESESERRQSRRGGRDDN) are compositionally biased toward basic and acidic residues. Positions 318 to 323 (NGLEET) match the NGXEET; peptidase recognition motif motif. The 150-residue stretch at 331 to 480 (ENIGDPSRAD…ALQIPREDAR (150 aa)) folds into the Cupin type-1 2 domain. Positions 487–510 (QESTLVRSRPSSSRSSRSERRAEV) are disordered.

The protein belongs to the 11S seed storage protein (globulins) family. Homohexamer. Can assemble in other multimeric configurations. In terms of processing, proteolytically processed from a single precursor to produce an acidic and a basic chain that are linked by a disulfide bond. As to expression, expressed in endosperm of the seed.

Seed storage protein. This Juglans nigra (Black walnut) protein is 11S globulin.